We begin with the raw amino-acid sequence, 221 residues long: 2-amino-5-formylamino-6-ribosylaminopyrimidin-4(3H)-one 5'-monophosphate deformylase (221 aa).

Fe cation-binding residues include glutamate 29, histidine 31, aspartate 40, and histidine 108.

This sequence belongs to the creatininase superfamily. FAPy deformylase family. Homodimer. Requires Fe(2+) as cofactor. Zn(2+) serves as cofactor.

It carries out the reaction 2-amino-5-formylamino-6-(5-phospho-D-ribosylamino)pyrimidin-4(3H)-one + H2O = 2,5-diamino-6-(1-D-ribosylamino)pyrimidin-4(3H)-one 5'-phosphate + formate + H(+). It functions in the pathway cofactor biosynthesis; coenzyme F420 biosynthesis. Its pathway is cofactor biosynthesis; riboflavin biosynthesis. Its function is as follows. Catalyzes the hydrolysis of the formamide of 2-amino-5-formylamino-6-ribosylamino-4(3H)-pyrimidinone 5'-monophosphate (FAPy) to form 2,5-diamino-6-ribosylamino-4(3H)-pyrimidinone 5'-phosphate (APy). This is 2-amino-5-formylamino-6-ribosylaminopyrimidin-4(3H)-one 5'-monophosphate deformylase from Methanococcus maripaludis (strain DSM 14266 / JCM 13030 / NBRC 101832 / S2 / LL).